We begin with the raw amino-acid sequence, 240 residues long: EF-hand domain-containing protein D1 (240 aa).

Residues Glu17 to Ser54 are disordered. EF-hand domains lie at Arg91–Pro126 and Gln127–Gly162. Residues Asp104, Asp108, Glu115, Asp140, Asp142, Asp144, Lys146, and Glu151 each contribute to the Ca(2+) site.

Widely expressed. Highest expression in testis, followed by ovary, kidney, cerebrum, cerebellum, heart, liver, and spleen. In the cerebrum and cerebellum, undetectable at embryonic stages, expression increases after birth up to adult stage. In adult CNS, detected in neurons of the cerebellum, cerebrum and hippocampus formation, including dentate gyrus and Cornu Ammonis, but not in the white matter. In the testis, expressed in spermatocytes, but not in spermatogonia nor in interstitial cells. In ovary, found predominantly in mural granulosa cells and those of the cumulus oophorus. In kidney, expressed in collecting ducts, but not in glomeruli. Not detected in skeletal muscle.

Its subcellular location is the mitochondrion inner membrane. In terms of biological role, acts as a calcium sensor for mitochondrial flash (mitoflash) activation, an event characterized by stochastic bursts of superoxide production. May play a role in neuronal differentiation. The protein is EF-hand domain-containing protein D1 (Efhd1) of Mus musculus (Mouse).